A 1013-amino-acid polypeptide reads, in one-letter code: GTPase-activating protein BEM3 (1013 aa).

Disordered stretches follow at residues 90–197 (TVVE…GSPA), 258–277 (GSRYDTERAGGPGPLSPESI), 282–301 (SDLQEHQPSDLSSTTRTDLG), and 307–421 (VDTT…HQSK). Positions 143-160 (QEATSGAQQVPLLTSSKS) are enriched in polar residues. Composition is skewed to polar residues over residues 309 to 319 (TTFNAEDNPTG), 333 to 388 (TLQN…TSSN), and 404 to 418 (KSYSQHSGSPHSNSH). The 108-residue stretch at 555 to 662 (EFAKEGMLLV…WISVLTTLCD (108 aa)) folds into the PH domain. Residues 702–726 (AMDATSPTRPNDPNPVSLTSEEEKE) are disordered. The span at 706-720 (TSPTRPNDPNPVSLT) shows a compositional bias: polar residues. Residues 799 to 1013 (LQLSSHPYQG…PPVNIHIPQI (215 aa)) form the Rho-GAP domain.

It localises to the cytoplasm. Functionally, GTPase-activating protein (GAP) for CDC42 and less efficiently for RHO1. Negative regulator of the pheromone-response pathway through the STE20 protein kinase. The sequence is that of GTPase-activating protein BEM3 (BEM3) from Eremothecium gossypii (strain ATCC 10895 / CBS 109.51 / FGSC 9923 / NRRL Y-1056) (Yeast).